The primary structure comprises 758 residues: Amyloid beta precursor protein binding family B member 2 (758 aa).

Phosphoserine is present on Ser123. The interval 134–154 (KLEGKEPHPQDSSSCEILPSQ) is disordered. Ser160 is modified (phosphoserine). The segment covering 176-190 (EQNRGNHHGTAEEKS) has biased composition (basic and acidic residues). Disordered stretches follow at residues 176 to 195 (EQNR…PVQG), 206 to 295 (LLLQ…LPPG), and 326 to 351 (DLQG…KQPW). Composition is skewed to polar residues over residues 212–230 (NRPQ…SSSP) and 261–275 (SWTT…PSSP). The WW domain occupies 290 to 322 (PDLPPGWKRVSDIAGTYYWHIPTGTTQWERPVS). Residues 331–340 (RKGSLSSVTP) show a composition bias toward polar residues. Phosphoserine is present on residues Ser334, Ser409, and Ser412. PID domains are found at residues 413-578 (DPEA…LQVD) and 584-736 (TELV…VTTN).

Interacts (via C-terminus) with APP (via C-terminus). Interacts with APLP2 (via cytoplasmic domain). In terms of tissue distribution, widely expressed.

The protein localises to the endoplasmic reticulum. It localises to the golgi apparatus. Its subcellular location is the early endosome. Functionally, plays a role in the maintenance of lens transparency, and may also play a role in muscle cell strength. Involved in hippocampal neurite branching and neuromuscular junction formation, as a result plays a role in spatial memory functioning. Activates transcription of APP. This Homo sapiens (Human) protein is Amyloid beta precursor protein binding family B member 2.